A 63-amino-acid polypeptide reads, in one-letter code: MVFALVCASCGRDLSEVRYRLLIERQKLSDVLRNLTHMCCRLKLATQIEPYRNLTVQPLLDIN.

It belongs to the poxviridae DNA-directed RNA polymerase 7 kDa subunit family. The DNA-dependent RNA polymerase used for intermediate and late genes expression consists of eight subunits 147 kDa, 133 kDa, 35 kDa, 30 kDa, 22 kDa, 19 kDa, 18 kDa and 7 kDa totalling more than 500 kDa in mass. The same holoenzyme, with the addition of the transcription-specificity factor RAP94, is used for early gene expression.

The protein resides in the virion. The enzyme catalyses RNA(n) + a ribonucleoside 5'-triphosphate = RNA(n+1) + diphosphate. Functionally, part of the DNA-dependent RNA polymerase which catalyzes the transcription of viral DNA into RNA using the four ribonucleoside triphosphates as substrates. Responsible for the transcription of early, intermediate and late genes. DNA-dependent RNA polymerase associates with the early transcription factor (ETF) thereby allowing the early genes transcription. Late transcription, and probably also intermediate transcription, require newly synthesized RNA polymerase. In Molluscum contagiosum virus subtype 1 (MOCV), this protein is DNA-directed RNA polymerase 7 kDa subunit (RPO7).